Consider the following 120-residue polypeptide: MFVLNGYEYVLGFLLACSLIPILALTASKILRPSGGGPERRTTYESGMEPIGGAWIQFNIRYYMFALVFVVFDVETVFLYPWAVAFSRLGLLAFVEALIFIAILVVALVYAWRKGALEWS.

A run of 3 helical transmembrane segments spans residues 7–27, 64–84, and 89–109; these read YEYV…ALTA, MFAL…PWAV, and LGLL…VALV.

It belongs to the complex I subunit 3 family. As to quaternary structure, NDH-1 can be composed of about 15 different subunits; different subcomplexes with different compositions have been identified which probably have different functions.

It localises to the cellular thylakoid membrane. The catalysed reaction is a plastoquinone + NADH + (n+1) H(+)(in) = a plastoquinol + NAD(+) + n H(+)(out). It carries out the reaction a plastoquinone + NADPH + (n+1) H(+)(in) = a plastoquinol + NADP(+) + n H(+)(out). NDH-1 shuttles electrons from an unknown electron donor, via FMN and iron-sulfur (Fe-S) centers, to quinones in the respiratory and/or the photosynthetic chain. The immediate electron acceptor for the enzyme in this species is believed to be plastoquinone. Couples the redox reaction to proton translocation, and thus conserves the redox energy in a proton gradient. Cyanobacterial NDH-1 also plays a role in inorganic carbon-concentration. The chain is NAD(P)H-quinone oxidoreductase subunit 3 from Crocosphaera subtropica (strain ATCC 51142 / BH68) (Cyanothece sp. (strain ATCC 51142)).